A 303-amino-acid chain; its full sequence is Dihydroorotate dehydrogenase B (NAD(+)), catalytic subunit (303 aa).

FMN is bound by residues serine 21 and 45-46 (KG). Residues lysine 45 and 69–73 (NSIGL) each bind substrate. 2 residues coordinate FMN: asparagine 99 and asparagine 127. Asparagine 127 is a binding site for substrate. Cysteine 130 serves as the catalytic Nucleophile. FMN contacts are provided by lysine 165 and isoleucine 191. Position 192 to 193 (192 to 193 (NT)) interacts with substrate. Residues glycine 217, 243-244 (GG), and 265-266 (GT) each bind FMN.

The protein belongs to the dihydroorotate dehydrogenase family. Type 1 subfamily. As to quaternary structure, heterotetramer of 2 PyrK and 2 PyrD type B subunits. Requires FMN as cofactor.

The protein resides in the cytoplasm. The catalysed reaction is (S)-dihydroorotate + NAD(+) = orotate + NADH + H(+). Its pathway is pyrimidine metabolism; UMP biosynthesis via de novo pathway; orotate from (S)-dihydroorotate (NAD(+) route): step 1/1. Functionally, catalyzes the conversion of dihydroorotate to orotate with NAD(+) as electron acceptor. The chain is Dihydroorotate dehydrogenase B (NAD(+)), catalytic subunit (pyrD) from Thermodesulfovibrio yellowstonii (strain ATCC 51303 / DSM 11347 / YP87).